Here is a 130-residue protein sequence, read N- to C-terminus: Small ribosomal subunit protein uS8 (130 aa).

This sequence belongs to the universal ribosomal protein uS8 family. In terms of assembly, part of the 30S ribosomal subunit.

Its function is as follows. One of the primary rRNA binding proteins, it binds directly to 16S rRNA central domain where it helps coordinate assembly of the platform of the 30S subunit. The chain is Small ribosomal subunit protein uS8 (rps8) from Methanocaldococcus jannaschii (strain ATCC 43067 / DSM 2661 / JAL-1 / JCM 10045 / NBRC 100440) (Methanococcus jannaschii).